Here is a 59-residue protein sequence, read N- to C-terminus: UPF0181 protein YoaH (59 aa).

The protein belongs to the UPF0181 family.

In Shigella sonnei (strain Ss046), this protein is UPF0181 protein YoaH.